Here is a 529-residue protein sequence, read N- to C-terminus: Isoleucine--tRNA ligase (529 aa).

Residue Glu482 participates in L-isoleucyl-5'-AMP binding. The 'KMSKS' region signature appears at 523–527 (KMSKS). Lys526 serves as a coordination point for ATP.

This sequence belongs to the class-I aminoacyl-tRNA synthetase family. IleS type 1 subfamily. As to quaternary structure, monomer.

Its subcellular location is the cytoplasm. It catalyses the reaction tRNA(Ile) + L-isoleucine + ATP = L-isoleucyl-tRNA(Ile) + AMP + diphosphate. Functionally, catalyzes the attachment of isoleucine to tRNA(Ile). As IleRS can inadvertently accommodate and process structurally similar amino acids such as valine, to avoid such errors it has two additional distinct tRNA(Ile)-dependent editing activities. One activity is designated as 'pretransfer' editing and involves the hydrolysis of activated Val-AMP. The other activity is designated 'posttransfer' editing and involves deacylation of mischarged Val-tRNA(Ile). This is Isoleucine--tRNA ligase (ileS) from Aquifex pyrophilus.